Reading from the N-terminus, the 781-residue chain is Isoquinoline 1-oxidoreductase subunit beta (781 aa).

As to quaternary structure, heterodimer of an alpha chain and a beta chain.

The enzyme catalyses isoquinoline + A + H2O = isoquinolin-1(2H)-one + AH2. Functionally, specific towards N-containing N-heterocyclic substrates, including isoquinoline, isoquinolin-5-ol, phthalazine and quinazoline. This is Isoquinoline 1-oxidoreductase subunit beta (iorB) from Brevundimonas diminuta (Pseudomonas diminuta).